Reading from the N-terminus, the 892-residue chain is DNA ligase (892 aa).

The tract at residues M1–G23 is disordered. NAD(+) is bound by residues D99–D103, S148–L149, and E182. K184 acts as the N6-AMP-lysine intermediate in catalysis. NAD(+)-binding residues include R205, E244, K369, and K393. 4 residues coordinate Zn(2+): C490, C493, C509, and C515. Positions G810–E892 constitute a BRCT domain.

Belongs to the NAD-dependent DNA ligase family. LigA subfamily. The cofactor is Mg(2+). Requires Mn(2+) as cofactor.

It carries out the reaction NAD(+) + (deoxyribonucleotide)n-3'-hydroxyl + 5'-phospho-(deoxyribonucleotide)m = (deoxyribonucleotide)n+m + AMP + beta-nicotinamide D-nucleotide.. DNA ligase that catalyzes the formation of phosphodiester linkages between 5'-phosphoryl and 3'-hydroxyl groups in double-stranded DNA using NAD as a coenzyme and as the energy source for the reaction. It is essential for DNA replication and repair of damaged DNA. This Bifidobacterium adolescentis (strain ATCC 15703 / DSM 20083 / NCTC 11814 / E194a) protein is DNA ligase.